We begin with the raw amino-acid sequence, 231 residues long: 7-cyano-7-deazaguanine synthase (231 aa).

ATP is bound at residue 7–17 (LSSGLDSVAAL). The Zn(2+) site is built by C195, C203, C206, and C209.

Belongs to the QueC family. Zn(2+) is required as a cofactor.

It carries out the reaction 7-carboxy-7-deazaguanine + NH4(+) + ATP = 7-cyano-7-deazaguanine + ADP + phosphate + H2O + H(+). It participates in purine metabolism; 7-cyano-7-deazaguanine biosynthesis. Functionally, catalyzes the ATP-dependent conversion of 7-carboxy-7-deazaguanine (CDG) to 7-cyano-7-deazaguanine (preQ(0)). The chain is 7-cyano-7-deazaguanine synthase from Methanosarcina mazei (strain ATCC BAA-159 / DSM 3647 / Goe1 / Go1 / JCM 11833 / OCM 88) (Methanosarcina frisia).